The following is a 220-amino-acid chain: Fructose-6-phosphate aldolase (220 aa).

Catalysis depends on Lys85, which acts as the Schiff-base intermediate with substrate.

The protein belongs to the transaldolase family. Type 3A subfamily. In terms of assembly, homodecamer.

It localises to the cytoplasm. It carries out the reaction beta-D-fructose 6-phosphate = dihydroxyacetone + D-glyceraldehyde 3-phosphate. Functionally, catalyzes the reversible formation of fructose 6-phosphate from dihydroxyacetone and D-glyceraldehyde 3-phosphate via an aldolization reaction. The protein is Fructose-6-phosphate aldolase of Salmonella choleraesuis (strain SC-B67).